The primary structure comprises 393 residues: Riboflavin biosynthesis protein RibBA (393 aa).

Residues methionine 1 to lysine 200 form a DHBP synthase region. D-ribulose 5-phosphate is bound by residues arginine 27 to glutamate 28, aspartate 32, arginine 139 to threonine 143, and glutamate 163. Glutamate 28 contributes to the Mg(2+) binding site. Histidine 142 contributes to the Mg(2+) binding site. Residues leucine 201 to isoleucine 393 form a GTP cyclohydrolase II region. Arginine 249–alanine 253 contacts GTP. Zn(2+) contacts are provided by cysteine 254, cysteine 265, and cysteine 267. GTP is bound by residues glutamine 270, glutamate 291 to arginine 293, and threonine 313. The Proton acceptor; for GTP cyclohydrolase activity role is filled by aspartate 325. Catalysis depends on arginine 327, which acts as the Nucleophile; for GTP cyclohydrolase activity. Residues serine 348 and lysine 353 each coordinate GTP.

In the N-terminal section; belongs to the DHBP synthase family. The protein in the C-terminal section; belongs to the GTP cyclohydrolase II family. It depends on Mg(2+) as a cofactor. The cofactor is Mn(2+). Zn(2+) serves as cofactor.

It catalyses the reaction D-ribulose 5-phosphate = (2S)-2-hydroxy-3-oxobutyl phosphate + formate + H(+). The enzyme catalyses GTP + 4 H2O = 2,5-diamino-6-hydroxy-4-(5-phosphoribosylamino)-pyrimidine + formate + 2 phosphate + 3 H(+). It participates in cofactor biosynthesis; riboflavin biosynthesis; 2-hydroxy-3-oxobutyl phosphate from D-ribulose 5-phosphate: step 1/1. The protein operates within cofactor biosynthesis; riboflavin biosynthesis; 5-amino-6-(D-ribitylamino)uracil from GTP: step 1/4. Functionally, catalyzes the conversion of D-ribulose 5-phosphate to formate and 3,4-dihydroxy-2-butanone 4-phosphate. Catalyzes the conversion of GTP to 2,5-diamino-6-ribosylamino-4(3H)-pyrimidinone 5'-phosphate (DARP), formate and pyrophosphate. The sequence is that of Riboflavin biosynthesis protein RibBA from Staphylococcus aureus (strain Mu50 / ATCC 700699).